A 225-amino-acid polypeptide reads, in one-letter code: Cytochrome c oxidase subunit 2 (225 aa).

Topologically, residues 1 to 25 (MSTWMMFMFQESNSLYADNLVSFHN) are mitochondrial intermembrane. The helical transmembrane segment at 26-47 (MVMIIVIMISTLTVYIIFDLFL) threads the bilayer. The Mitochondrial matrix segment spans residues 48-62 (NKFSNLYLLKNHNIE). A helical transmembrane segment spans residues 63–82 (IIWMIVPIVILLIICFPSLK). The Mitochondrial intermembrane portion of the chain corresponds to 83–225 (ILYLIDEIVN…YFMNWIYKMN (143 aa)). The Cu cation site is built by His159, Cys194, Glu196, Cys198, His202, and Met205. Mg(2+) is bound at residue Glu196.

It belongs to the cytochrome c oxidase subunit 2 family. As to quaternary structure, component of the cytochrome c oxidase (complex IV, CIV), a multisubunit enzyme composed of a catalytic core of 3 subunits and several supernumerary subunits. The complex exists as a monomer or a dimer and forms supercomplexes (SCs) in the inner mitochondrial membrane with ubiquinol-cytochrome c oxidoreductase (cytochrome b-c1 complex, complex III, CIII). Cu cation serves as cofactor.

It localises to the mitochondrion inner membrane. It catalyses the reaction 4 Fe(II)-[cytochrome c] + O2 + 8 H(+)(in) = 4 Fe(III)-[cytochrome c] + 2 H2O + 4 H(+)(out). Its function is as follows. Component of the cytochrome c oxidase, the last enzyme in the mitochondrial electron transport chain which drives oxidative phosphorylation. The respiratory chain contains 3 multisubunit complexes succinate dehydrogenase (complex II, CII), ubiquinol-cytochrome c oxidoreductase (cytochrome b-c1 complex, complex III, CIII) and cytochrome c oxidase (complex IV, CIV), that cooperate to transfer electrons derived from NADH and succinate to molecular oxygen, creating an electrochemical gradient over the inner membrane that drives transmembrane transport and the ATP synthase. Cytochrome c oxidase is the component of the respiratory chain that catalyzes the reduction of oxygen to water. Electrons originating from reduced cytochrome c in the intermembrane space (IMS) are transferred via the dinuclear copper A center (CU(A)) of subunit 2 and heme A of subunit 1 to the active site in subunit 1, a binuclear center (BNC) formed by heme A3 and copper B (CU(B)). The BNC reduces molecular oxygen to 2 water molecules using 4 electrons from cytochrome c in the IMS and 4 protons from the mitochondrial matrix. The polypeptide is Cytochrome c oxidase subunit 2 (COII) (Apis florea (Dwarf honeybee)).